A 126-amino-acid polypeptide reads, in one-letter code: Profilin (126 aa).

The protein belongs to the profilin family. As to quaternary structure, occurs in many kinds of cells as a complex with monomeric actin in a 1:1 ratio.

It localises to the cytoplasm. Its subcellular location is the cytoskeleton. Its function is as follows. Binds to actin and affects the structure of the cytoskeleton. At high concentrations, profilin prevents the polymerization of actin, whereas it enhances it at low concentrations. By binding to PIP2, it inhibits the formation of IP3 and DG. This Saccharomyces cerevisiae (strain ATCC 204508 / S288c) (Baker's yeast) protein is Profilin (PFY1).